The sequence spans 238 residues: Ribonuclease PH (238 aa).

Residues Arg86 and 124–126 each bind phosphate; that span reads GTR.

The protein belongs to the RNase PH family. In terms of assembly, homohexameric ring arranged as a trimer of dimers.

It catalyses the reaction tRNA(n+1) + phosphate = tRNA(n) + a ribonucleoside 5'-diphosphate. Functionally, phosphorolytic 3'-5' exoribonuclease that plays an important role in tRNA 3'-end maturation. Removes nucleotide residues following the 3'-CCA terminus of tRNAs; can also add nucleotides to the ends of RNA molecules by using nucleoside diphosphates as substrates, but this may not be physiologically important. Probably plays a role in initiation of 16S rRNA degradation (leading to ribosome degradation) during starvation. The sequence is that of Ribonuclease PH from Chelativorans sp. (strain BNC1).